A 222-amino-acid chain; its full sequence is MEAPRSVGGRIQRKPLADCTNTVSRSSQQSSSSVKFANPSLTSSLKRLVEQTTLKEKPKDVNTSATAPEIASRPITTDVRPVTRRMSADLASPASAPSRPQTSRSDMGVSDKDFTEPWSVYTVRRKASGQKRSKDASSSTSAAARIRLDLSSSSGKKTRQASENKKKTLKVAPKKRQRTVKQEKEDPVSAACQDYIEKQKAYFAEIDAFELPVEEVSNSDSD.

Residues 1-189 (MEAPRSVGGR…VKQEKEDPVS (189 aa)) are disordered. Positions 24–33 (SRSSQQSSSS) are enriched in low complexity. A compositionally biased stretch (basic and acidic residues) spans 47–60 (RLVEQTTLKEKPKD). Residues 88-105 (ADLASPASAPSRPQTSRS) show a composition bias toward low complexity. Positions 155-162 (GKKTRQAS) match the Nuclear localization signal motif. The segment covering 167–179 (KTLKVAPKKRQRT) has biased composition (basic residues). Residues 192-214 (CQDYIEKQKAYFAEIDAFELPVE) are C-terminal Sororin domain.

The protein belongs to the sororin family.

The protein resides in the nucleus. Regulator of sister chromatid cohesion in mitosis stabilizing cohesin complex association with chromatin. Antagonizes the action of WAPL proteins (WAPL1 and WAPL2) which stimulates cohesin dissociation from chromatin, particularly during somatic division in root cells and meiocytes during anaphase I. Required for centromeric sister chromatid cohesion during male meiosis (microsporogenesis). Cohesion ensures that chromosome partitioning is accurate in dividing cells and may play an important role in DNA repair. The chain is Sororin-like protein from Arabidopsis thaliana (Mouse-ear cress).